The primary structure comprises 263 residues: MNRIYLYLLIVLILAGCSSPGGRYDMSDDQAPDTPLSVEHIEDAHPQYEPYSFGGNKDYNLRGKSYRIIKNPKGFTESGKASWYGKKFHGHLTSNGEIYDMYSMTAAHKTLPIPSYVKVTNTDNGKSTVVRVNDRGPFHDGRIIDLSYAAAYKIGVVQAGTANVRIEVITVDKPTKPRPKSKNNALEYVIQVVSSQHIERVRTLAQNLGQNLSAPSFVESTNNTHRLFLGPFTDDDLTQTLLEQVKSAGYDSAFIKTINKRAK.

A signal peptide spans 1–16 (MNRIYLYLLIVLILAG). Cysteine 17 is lipidated: N-palmitoyl cysteine. The S-diacylglycerol cysteine moiety is linked to residue cysteine 17. Positions 182–257 (KNNALEYVIQ…AGYDSAFIKT (76 aa)) constitute an SPOR domain.

This sequence belongs to the RlpA family.

It localises to the cell membrane. Functionally, lytic transglycosylase with a strong preference for naked glycan strands that lack stem peptides. This is Endolytic peptidoglycan transglycosylase RlpA from Vibrio cholerae serotype O1 (strain ATCC 39315 / El Tor Inaba N16961).